An 89-amino-acid chain; its full sequence is Large ribosomal subunit protein bL27 (89 aa).

Positions 1–22 (MAHKKGTGSTRNGRDSNAQRLG) are disordered. Polar residues predominate over residues 7–19 (TGSTRNGRDSNAQ).

This sequence belongs to the bacterial ribosomal protein bL27 family.

This Cyanothece sp. (strain PCC 7425 / ATCC 29141) protein is Large ribosomal subunit protein bL27.